Here is a 300-residue protein sequence, read N- to C-terminus: Probable low-salt glycan biosynthesis reductase Agl14 (300 aa).

NADH-binding positions include Gly10 to Leu12, Asp46 to Ile47, and Ala70 to Thr72. NADPH-binding positions include Leu11–Leu12, Asp46–Ile47, Ala70–Thr72, Tyr109, Tyr135, and Lys139. The NADH site is built by Tyr135 and Lys139. Tyr135 serves as the catalytic Proton donor/acceptor.

This sequence belongs to the dTDP-4-dehydrorhamnose reductase family.

The protein operates within protein modification; protein glycosylation. It functions in the pathway cell surface structure biogenesis; S-layer biogenesis. Its function is as follows. Reductase involved in N-glycan biosynthetic pathway that takes place under low-salt conditions (1.75 M instead of 3.4 M). Participates in the formation of the tetrasaccharide present at 'Asn-532' of S-layer glycoprotein Csg, consisting of a sulfated hexose, 2 hexoses and rhamnose. Involved in the addition of final rhamnose (sugar 4) of the tetrasaccharide on the dolichol phosphate carrier. This is Probable low-salt glycan biosynthesis reductase Agl14 (agl14) from Haloferax volcanii (strain ATCC 29605 / DSM 3757 / JCM 8879 / NBRC 14742 / NCIMB 2012 / VKM B-1768 / DS2) (Halobacterium volcanii).